The following is a 651-amino-acid chain: Ion-translocating oxidoreductase complex subunit C (651 aa).

4Fe-4S ferredoxin-type domains follow at residues 368-398 and 408-437; these read EYAE…QQLY and KSEE…IQYF. Residues cysteine 378, cysteine 381, cysteine 384, cysteine 388, cysteine 417, cysteine 420, cysteine 423, and cysteine 427 each contribute to the [4Fe-4S] cluster site. 2 stretches are compositionally biased toward basic and acidic residues: residues 465 to 477 and 485 to 513; these read QARM…ERKA and ARRE…KANE. 2 disordered regions span residues 465–565 and 583–624; these read QARM…QPTD and LAQA…DPKK. 2 stretches are compositionally biased toward polar residues: residues 554-564 and 587-600; these read VENQEQQTQPT and NSTS…QTAE. The span at 602–614 shows a compositional bias: basic and acidic residues; the sequence is EVEKTKSAVEKTQ.

The protein belongs to the 4Fe4S bacterial-type ferredoxin family. RnfC subfamily. In terms of assembly, the complex is composed of six subunits: RnfA, RnfB, RnfC, RnfD, RnfE and RnfG. [4Fe-4S] cluster serves as cofactor.

It localises to the cell inner membrane. In terms of biological role, part of a membrane-bound complex that couples electron transfer with translocation of ions across the membrane. This chain is Ion-translocating oxidoreductase complex subunit C, found in Haemophilus influenzae (strain PittEE).